Reading from the N-terminus, the 143-residue chain is Nucleoside diphosphate kinase (143 aa).

6 residues coordinate ATP: K11, F59, R87, T93, R104, and N114. H117 (pros-phosphohistidine intermediate) is an active-site residue.

Belongs to the NDK family. As to quaternary structure, homotetramer. Requires Mg(2+) as cofactor.

Its subcellular location is the cytoplasm. The enzyme catalyses a 2'-deoxyribonucleoside 5'-diphosphate + ATP = a 2'-deoxyribonucleoside 5'-triphosphate + ADP. The catalysed reaction is a ribonucleoside 5'-diphosphate + ATP = a ribonucleoside 5'-triphosphate + ADP. Functionally, major role in the synthesis of nucleoside triphosphates other than ATP. The ATP gamma phosphate is transferred to the NDP beta phosphate via a ping-pong mechanism, using a phosphorylated active-site intermediate. In Shewanella denitrificans (strain OS217 / ATCC BAA-1090 / DSM 15013), this protein is Nucleoside diphosphate kinase.